The chain runs to 417 residues: Serine--tRNA ligase (417 aa).

232-234 lines the L-serine pocket; the sequence is TAE. ATP contacts are provided by residues 263-265 and valine 279; that span reads RRE. Residue glutamate 286 participates in L-serine binding. 350–353 provides a ligand contact to ATP; that stretch reads EISS. Serine 385 contributes to the L-serine binding site.

Belongs to the class-II aminoacyl-tRNA synthetase family. Type-1 seryl-tRNA synthetase subfamily. Homodimer. The tRNA molecule binds across the dimer.

It localises to the cytoplasm. It catalyses the reaction tRNA(Ser) + L-serine + ATP = L-seryl-tRNA(Ser) + AMP + diphosphate + H(+). The catalysed reaction is tRNA(Sec) + L-serine + ATP = L-seryl-tRNA(Sec) + AMP + diphosphate + H(+). It functions in the pathway aminoacyl-tRNA biosynthesis; selenocysteinyl-tRNA(Sec) biosynthesis; L-seryl-tRNA(Sec) from L-serine and tRNA(Sec): step 1/1. In terms of biological role, catalyzes the attachment of serine to tRNA(Ser). Is also able to aminoacylate tRNA(Sec) with serine, to form the misacylated tRNA L-seryl-tRNA(Sec), which will be further converted into selenocysteinyl-tRNA(Sec). This is Serine--tRNA ligase from Leptospira borgpetersenii serovar Hardjo-bovis (strain JB197).